The following is a 436-amino-acid chain: Magnesium transporter MRS2-B (436 aa).

Low complexity-rich tracts occupy residues 1-14 (MSAA…GDSA) and 29-54 (VASV…FPGG). Positions 1 to 60 (MSAAAASSAAGDSAKQPLLHHQRGNPPHVASVSSPSLPSAPPGALAGGRRFPGGLDVPNL) are disordered. Residues 176 to 242 (LALEAACSFL…RDEIEQLMDD (67 aa)) are a coiled coil. A run of 2 helical transmembrane segments spans residues 372–392 (LLLT…GIFG) and 408–428 (WVLI…LWFF). A Required for magnesium transport activity motif is present at residues 392–394 (GMN).

It belongs to the CorA metal ion transporter (MIT) (TC 1.A.35.5) family.

The protein localises to the membrane. Its function is as follows. Magnesium transporter that may mediate the influx of magnesium. In Oryza sativa subsp. indica (Rice), this protein is Magnesium transporter MRS2-B (MRS2-B).